The sequence spans 164 residues: UBA-like domain-containing protein 2 (164 aa).

N-acetylserine is present on Ser2. The tract at residues 144-164 is disordered; that stretch reads PPGASQGGAPQKAMAAMDGQR.

Belongs to the UBALD family.

This is UBA-like domain-containing protein 2 (Ubald2) from Mus musculus (Mouse).